Here is a 1404-residue protein sequence, read N- to C-terminus: DNA-directed RNA polymerase subunit beta' (1404 aa).

Positions 60, 62, 75, and 78 each coordinate Zn(2+). The Mg(2+) site is built by Asp449, Asp451, and Asp453. Zn(2+) is bound by residues Cys778, Cys852, Cys859, and Cys862. The interval 1380 to 1404 (LDRPLEEEEEEEIPQAIAEESDAEE) is disordered. Residues 1384–1404 (LEEEEEEEIPQAIAEESDAEE) are compositionally biased toward acidic residues.

Belongs to the RNA polymerase beta' chain family. In terms of assembly, the RNAP catalytic core consists of 2 alpha, 1 beta, 1 beta' and 1 omega subunit. When a sigma factor is associated with the core the holoenzyme is formed, which can initiate transcription. Requires Mg(2+) as cofactor. It depends on Zn(2+) as a cofactor.

The enzyme catalyses RNA(n) + a ribonucleoside 5'-triphosphate = RNA(n+1) + diphosphate. Functionally, DNA-dependent RNA polymerase catalyzes the transcription of DNA into RNA using the four ribonucleoside triphosphates as substrates. This Leptospira interrogans serogroup Icterohaemorrhagiae serovar Lai (strain 56601) protein is DNA-directed RNA polymerase subunit beta'.